Consider the following 467-residue polypeptide: MTMSTARTAVRSLESLGRVHFIGIGGVGMSAVARIMVARGVPVTGSDAKDLPVMADLAAAGAGIHVGYSAGNLGAAEAVVAGSAIRADNPELQAARAAGLPVLHRSEALAAAMAGDRVVTVAGTHGKSTTTSMVTVLLQGAGLDPTFAIGANVPSLGVNAASGTSDIFVAEADESDGSFLNYRPHIAVVTNVEPDHLDYYGTAEAVYESFDSFTELLPADGVLVACADDPGARALAERTRTRGNTRVVTYGTAEDAQLRLHDGGPGDVWVSTGAGRFALDLQVPGRHNALNAAAAFAVALELGVAPDAASGALAHFSGASRRFEFKGEGRGVRVYDDYAHHPTEVRAALAAARSVAGDHKVHVLFQPHLFSRTREFAADFAEALNAADTALVLDIYPAREDPIPGVSSKLIGDRLSAGGRLVAAEDAVRAVVANAAAGDIVLTAGAGDVTAYGPLIVEALLAEAPGG.

Position 123-129 (123-129) interacts with ATP; sequence GTHGKST.

The protein belongs to the MurCDEF family.

The protein resides in the cytoplasm. The catalysed reaction is UDP-N-acetyl-alpha-D-muramate + L-alanine + ATP = UDP-N-acetyl-alpha-D-muramoyl-L-alanine + ADP + phosphate + H(+). The protein operates within cell wall biogenesis; peptidoglycan biosynthesis. Its function is as follows. Cell wall formation. The protein is UDP-N-acetylmuramate--L-alanine ligase of Arthrobacter sp. (strain FB24).